The primary structure comprises 162 residues: Zinc finger protein ZAT12 (162 aa).

2 C2H2-type zinc fingers span residues 39 to 61 (FTCKTCLKQFHSFQALGGHRASH) and 82 to 104 (HPCPICGVEFPMGQALGGHMRRH).

As to expression, expressed in roots, stems and flowers.

It is found in the nucleus. Transcriptional repressor involved in light acclimation, cold and oxidative stress responses. May regulate a collection of transcripts involved in response to high-light, cold and oxidative stress. The chain is Zinc finger protein ZAT12 (ZAT12) from Arabidopsis thaliana (Mouse-ear cress).